We begin with the raw amino-acid sequence, 189 residues long: Transcription factor FapR (189 aa).

Belongs to the FapR family.

Functionally, transcriptional factor involved in regulation of membrane lipid biosynthesis by repressing genes involved in fatty acid and phospholipid metabolism. The sequence is that of Transcription factor FapR from Listeria welshimeri serovar 6b (strain ATCC 35897 / DSM 20650 / CCUG 15529 / CIP 8149 / NCTC 11857 / SLCC 5334 / V8).